A 277-amino-acid polypeptide reads, in one-letter code: Putative phosphoenolpyruvate synthase regulatory protein (277 aa).

ADP is bound at residue 156-163 (GVSRAGKT).

It belongs to the pyruvate, phosphate/water dikinase regulatory protein family. PSRP subfamily.

It catalyses the reaction [pyruvate, water dikinase] + ADP = [pyruvate, water dikinase]-phosphate + AMP + H(+). It carries out the reaction [pyruvate, water dikinase]-phosphate + phosphate + H(+) = [pyruvate, water dikinase] + diphosphate. Functionally, bifunctional serine/threonine kinase and phosphorylase involved in the regulation of the phosphoenolpyruvate synthase (PEPS) by catalyzing its phosphorylation/dephosphorylation. In Deinococcus radiodurans (strain ATCC 13939 / DSM 20539 / JCM 16871 / CCUG 27074 / LMG 4051 / NBRC 15346 / NCIMB 9279 / VKM B-1422 / R1), this protein is Putative phosphoenolpyruvate synthase regulatory protein.